We begin with the raw amino-acid sequence, 1011 residues long: Protein translocase subunit SecA (1011 aa).

ATP contacts are provided by residues Q87, 105–109 (GEGKT), and D500. A disordered region spans residues 969-1011 (SLPLGANPAPARPQPAVMQEQECPCGSGKPFNKCHGGEDEATA). Zn(2+) contacts are provided by C991, C993, C1002, and H1003.

It belongs to the SecA family. As to quaternary structure, monomer and homodimer. Part of the essential Sec protein translocation apparatus which comprises SecA, SecYEG and auxiliary proteins SecDF-YajC and YidC. Zn(2+) is required as a cofactor.

Its subcellular location is the cell inner membrane. It localises to the cytoplasm. The enzyme catalyses ATP + H2O + cellular proteinSide 1 = ADP + phosphate + cellular proteinSide 2.. Functionally, part of the Sec protein translocase complex. Interacts with the SecYEG preprotein conducting channel. Has a central role in coupling the hydrolysis of ATP to the transfer of proteins into and across the cell membrane, serving as an ATP-driven molecular motor driving the stepwise translocation of polypeptide chains across the membrane. The protein is Protein translocase subunit SecA of Sorangium cellulosum (strain So ce56) (Polyangium cellulosum (strain So ce56)).